Reading from the N-terminus, the 231-residue chain is Small ribosomal subunit protein uS3 (231 aa).

The region spanning 39 to 107 is the KH type-2 domain; the sequence is VREFLKEKLK…PAQINIAEVR (69 aa).

Belongs to the universal ribosomal protein uS3 family. As to quaternary structure, part of the 30S ribosomal subunit. Forms a tight complex with proteins S10 and S14.

Binds the lower part of the 30S subunit head. Binds mRNA in the 70S ribosome, positioning it for translation. The polypeptide is Small ribosomal subunit protein uS3 (Colwellia psychrerythraea (strain 34H / ATCC BAA-681) (Vibrio psychroerythus)).